The primary structure comprises 242 residues: ATP synthase subunit a (242 aa).

The next 6 membrane-spanning stretches (helical) occupy residues 29-49 (SSIY…LAFY), 84-104 (FIPL…LGMT), 114-134 (IIVT…VGFV), 140-160 (FLTL…MIVI), 181-201 (MAGH…MIYL), and 203-223 (FLPI…AILQ).

The protein belongs to the ATPase A chain family. In terms of assembly, F-type ATPases have 2 components, CF(1) - the catalytic core - and CF(0) - the membrane proton channel. CF(1) has five subunits: alpha(3), beta(3), gamma(1), delta(1), epsilon(1). CF(0) has three main subunits: a(1), b(2) and c(9-12). The alpha and beta chains form an alternating ring which encloses part of the gamma chain. CF(1) is attached to CF(0) by a central stalk formed by the gamma and epsilon chains, while a peripheral stalk is formed by the delta and b chains.

The protein resides in the cell inner membrane. In terms of biological role, key component of the proton channel; it plays a direct role in the translocation of protons across the membrane. In Rickettsia rickettsii (strain Sheila Smith), this protein is ATP synthase subunit a.